Consider the following 142-residue polypeptide: 3-hydroxyacyl-[acyl-carrier-protein] dehydratase FabZ (142 aa).

The active site involves His-41.

Belongs to the thioester dehydratase family. FabZ subfamily.

It localises to the cytoplasm. It carries out the reaction a (3R)-hydroxyacyl-[ACP] = a (2E)-enoyl-[ACP] + H2O. Functionally, involved in unsaturated fatty acids biosynthesis. Catalyzes the dehydration of short chain beta-hydroxyacyl-ACPs and long chain saturated and unsaturated beta-hydroxyacyl-ACPs. This chain is 3-hydroxyacyl-[acyl-carrier-protein] dehydratase FabZ, found in Symbiobacterium thermophilum (strain DSM 24528 / JCM 14929 / IAM 14863 / T).